A 116-amino-acid chain; its full sequence is Large ribosomal subunit protein eL30 (116 aa).

It belongs to the eukaryotic ribosomal protein eL30 family. In terms of assembly, component of the large ribosomal subunit.

The protein resides in the cytoplasm. Component of the large ribosomal subunit. The ribosome is a large ribonucleoprotein complex responsible for the synthesis of proteins in the cell. This is Large ribosomal subunit protein eL30 (rpl30) from Ictalurus punctatus (Channel catfish).